Reading from the N-terminus, the 500-residue chain is Probable cytosol aminopeptidase (500 aa).

Positions 268 and 273 each coordinate Mn(2+). Residue Lys-280 is part of the active site. Residues Asp-291, Asp-350, and Glu-352 each coordinate Mn(2+). Residue Arg-354 is part of the active site.

The protein belongs to the peptidase M17 family. Mn(2+) serves as cofactor.

Its subcellular location is the cytoplasm. It carries out the reaction Release of an N-terminal amino acid, Xaa-|-Yaa-, in which Xaa is preferably Leu, but may be other amino acids including Pro although not Arg or Lys, and Yaa may be Pro. Amino acid amides and methyl esters are also readily hydrolyzed, but rates on arylamides are exceedingly low.. The catalysed reaction is Release of an N-terminal amino acid, preferentially leucine, but not glutamic or aspartic acids.. Presumably involved in the processing and regular turnover of intracellular proteins. Catalyzes the removal of unsubstituted N-terminal amino acids from various peptides. The polypeptide is Probable cytosol aminopeptidase (Azoarcus sp. (strain BH72)).